Consider the following 348-residue polypeptide: MSLLVVSMACVGFFLLQGAWPHEGVHRKPSLLAHPGRLVKSEETVILQCWSDVMFEHFLLHREGMFNDTLRLIGEHHDGVSKANFSISRMTQDLAGTYRCYGSVTHSPYQVSAPSDPLDIVIIGLYEKPSLSAQLGPTVLAGENVTLSCSSRSSYDMYHLSREGEAHERRLPAGPKVNGTFQADFPLGPATHGGTYRCFGSFHDSPYEWSKSSDPLLVSVTGNPSNSWPSPTEPSSKTGNPRHLHILIGTSVVIILFILLFFLLHRWCSNKKNAAVMDQESAGNRTANSEDSDEQDPQEVTYTQLNHCVFTQRKITRPSQRPKTPPTDIIVYTELPNAESRSKVVSCP.

Residues 1–21 (MSLLVVSMACVGFFLLQGAWP) form the signal peptide. Topologically, residues 22–245 (HEGVHRKPSL…SKTGNPRHLH (224 aa)) are extracellular. Ig-like C2-type domains follow at residues 42–107 (EETV…VTHS) and 142–205 (GENV…FHDS). A disulfide bridge links Cys-49 with Cys-100. 4 N-linked (GlcNAc...) asparagine glycosylation sites follow: Asn-67, Asn-84, Asn-144, and Asn-178. Cys-149 and Cys-198 are disulfide-bonded. The tract at residues 220–239 (VTGNPSNSWPSPTEPSSKTG) is disordered. Residues 246 to 264 (ILIGTSVVIILFILLFFLL) form a helical membrane-spanning segment. Over 265–348 (HRWCSNKKNA…ESRSKVVSCP (84 aa)) the chain is Cytoplasmic.

It belongs to the immunoglobulin superfamily. In terms of assembly, interacts with ARRB2. Interacts with PTPN6; the interaction is enhanced by ARRB2. Interacts with PTPN11; the interaction is enhanced by ARRB2. As to expression, expressed by NK cells.

It localises to the cell membrane. Receptor on natural killer (NK) cells for some HLA-C alleles such as w4 and w6. Inhibits the activity of NK cells thus preventing cell lysis. This chain is Killer cell immunoglobulin-like receptor 2DL1, found in Homo sapiens (Human).